The following is a 652-amino-acid chain: Phosphomethylpyrimidine synthase (652 aa).

Residues Asn257, Met286, Tyr315, His351, 371 to 373 (SRG), 412 to 415 (DGLR), and Glu451 contribute to the substrate site. A Zn(2+)-binding site is contributed by His455. Tyr478 is a binding site for substrate. His519 is a Zn(2+) binding site. Residues Cys599, Cys602, and Cys607 each contribute to the [4Fe-4S] cluster site.

Belongs to the ThiC family. As to quaternary structure, homodimer. It depends on [4Fe-4S] cluster as a cofactor.

It catalyses the reaction 5-amino-1-(5-phospho-beta-D-ribosyl)imidazole + S-adenosyl-L-methionine = 4-amino-2-methyl-5-(phosphooxymethyl)pyrimidine + CO + 5'-deoxyadenosine + formate + L-methionine + 3 H(+). It participates in cofactor biosynthesis; thiamine diphosphate biosynthesis. Its function is as follows. Catalyzes the synthesis of the hydroxymethylpyrimidine phosphate (HMP-P) moiety of thiamine from aminoimidazole ribotide (AIR) in a radical S-adenosyl-L-methionine (SAM)-dependent reaction. The protein is Phosphomethylpyrimidine synthase of Thiobacillus denitrificans (strain ATCC 25259 / T1).